The primary structure comprises 453 residues: Aldehyde dehydrogenase, dimeric NADP-preferring (453 aa).

Ser2 is modified (N-acetylserine). N6-acetyllysine is present on Lys178. 188–193 contributes to the NAD(+) binding site; that stretch reads GNTAVG. The residue at position 194 (Lys194) is an N6-acetyllysine. Residues Glu210 and Cys244 contribute to the active site.

Belongs to the aldehyde dehydrogenase family. Homodimer.

It is found in the cytoplasm. It carries out the reaction an aldehyde + NAD(+) + H2O = a carboxylate + NADH + 2 H(+). It catalyses the reaction octanal + NAD(+) + H2O = octanoate + NADH + 2 H(+). ALDHs play a major role in the detoxification of alcohol-derived acetaldehyde. They are involved in the metabolism of corticosteroids, biogenic amines, neurotransmitters, and lipid peroxidation. Oxidizes medium and long chain aldehydes into non-toxic fatty acids. Preferentially oxidizes aromatic aldehyde substrates. Comprises about 50 percent of corneal epithelial soluble proteins. May play a role in preventing corneal damage caused by ultraviolet light. This Canis lupus familiaris (Dog) protein is Aldehyde dehydrogenase, dimeric NADP-preferring (ALDH3A1).